A 632-amino-acid polypeptide reads, in one-letter code: 1-deoxy-D-xylulose-5-phosphate synthase (632 aa).

Thiamine diphosphate is bound by residues His-72 and 113 to 115; that span reads GHA. Residue Asp-144 participates in Mg(2+) binding. Residues 145 to 146, Asn-174, Tyr-285, and Glu-368 each bind thiamine diphosphate; that span reads GA. Position 174 (Asn-174) interacts with Mg(2+).

It belongs to the transketolase family. DXPS subfamily. In terms of assembly, homodimer. Requires Mg(2+) as cofactor. Thiamine diphosphate serves as cofactor.

It carries out the reaction D-glyceraldehyde 3-phosphate + pyruvate + H(+) = 1-deoxy-D-xylulose 5-phosphate + CO2. Its pathway is metabolic intermediate biosynthesis; 1-deoxy-D-xylulose 5-phosphate biosynthesis; 1-deoxy-D-xylulose 5-phosphate from D-glyceraldehyde 3-phosphate and pyruvate: step 1/1. Catalyzes the acyloin condensation reaction between C atoms 2 and 3 of pyruvate and glyceraldehyde 3-phosphate to yield 1-deoxy-D-xylulose-5-phosphate (DXP). The polypeptide is 1-deoxy-D-xylulose-5-phosphate synthase (Cyanothece sp. (strain PCC 7425 / ATCC 29141)).